A 1047-amino-acid chain; its full sequence is Probable alpha-mannosidase At5g66150 (1047 aa).

Positions 1–27 (MEKPGMSLLKGSLCVIVFLLLLSLVES) are cleaved as a signal peptide. The Zn(2+) site is built by His56, Asp58, and Asp178. Residues Asn280, Asn287, and Asn345 are each glycosylated (N-linked (GlcNAc...) asparagine). Residue His419 coordinates Zn(2+). 2 cysteine pairs are disulfide-bonded: Cys455/Cys465 and Cys476/Cys484. Asn480, Asn508, Asn541, Asn605, Asn606, Asn668, Asn780, and Asn857 each carry an N-linked (GlcNAc...) asparagine glycan. Cysteines 855 and 860 form a disulfide.

The protein belongs to the glycosyl hydrolase 38 family. Homodimer. Zn(2+) is required as a cofactor.

The protein resides in the vacuole. It catalyses the reaction Hydrolysis of terminal, non-reducing alpha-D-mannose residues in alpha-D-mannosides.. In terms of biological role, liberates mannose from p-nitrophenyl-alpha-D-mannoside in vitro. This is Probable alpha-mannosidase At5g66150 from Arabidopsis thaliana (Mouse-ear cress).